The sequence spans 1039 residues: Isoleucine--tRNA ligase (1039 aa).

The 'HIGH' region motif lies at 46 to 56 (PYCSGAIHLGT). Residues 600-604 (KMSKS) carry the 'KMSKS' region motif. Lys603 is a binding site for ATP.

The protein belongs to the class-I aminoacyl-tRNA synthetase family. IleS type 2 subfamily. As to quaternary structure, monomer. Zn(2+) serves as cofactor.

It is found in the cytoplasm. The catalysed reaction is tRNA(Ile) + L-isoleucine + ATP = L-isoleucyl-tRNA(Ile) + AMP + diphosphate. Catalyzes the attachment of isoleucine to tRNA(Ile). As IleRS can inadvertently accommodate and process structurally similar amino acids such as valine, to avoid such errors it has two additional distinct tRNA(Ile)-dependent editing activities. One activity is designated as 'pretransfer' editing and involves the hydrolysis of activated Val-AMP. The other activity is designated 'posttransfer' editing and involves deacylation of mischarged Val-tRNA(Ile). This is Isoleucine--tRNA ligase from Methanocaldococcus jannaschii (strain ATCC 43067 / DSM 2661 / JAL-1 / JCM 10045 / NBRC 100440) (Methanococcus jannaschii).